The primary structure comprises 395 residues: FAD-dependent urate hydroxylase (395 aa).

Residues G11, 30 to 31 (ER), S43, and M125 contribute to the FAD site. Residues N180, R206, and 218-220 (YFF) contribute to the substrate site. FAD is bound by residues D287 and 297-301 (GQGGC).

The protein belongs to the FAD-dependent urate hydroxylase family. Monomer. FAD serves as cofactor.

It catalyses the reaction urate + NADH + O2 + H(+) = 5-hydroxyisourate + NAD(+) + H2O. The protein operates within purine metabolism; urate degradation. Its function is as follows. Catalyzes the hydroxylation of urate to 5-hydroxyisourate (HIU). Is likely to be involved in the urate degradation pathway to allantoin. Prefers NADH over NADPH as the electron donor. The protein is FAD-dependent urate hydroxylase of Mycolicibacterium vanbaalenii (strain DSM 7251 / JCM 13017 / BCRC 16820 / KCTC 9966 / NRRL B-24157 / PYR-1) (Mycobacterium vanbaalenii).